Consider the following 105-residue polypeptide: uncharacterized protein (105 aa).

The chain crosses the membrane as a helical span at residues 25–47 (AHSVTLLFGIFRSSPFLLLFLLI). The interval 54–89 (GRGSQRMKKKRGRANPSENLRERADPTNGPAENGKK) is disordered.

The protein resides in the membrane. This is an uncharacterized protein from Saccharomyces cerevisiae (strain ATCC 204508 / S288c) (Baker's yeast).